A 418-amino-acid chain; its full sequence is Putative ion-transport protein YfeO (418 aa).

Transmembrane regions (helical) follow at residues 10–30 (LLLSLPAVAIGIASSLILIVV), 54–74 (DSPFWIIAILTLTGIAVGLVI), 99–119 (ALPGLIVALILGLAGGVSLGP), 120–140 (EHPIMTVNIALAVAIGARLLP), 149–169 (ILASAGTIGALFGTPVAAALI), 186–206 (LFAPLMAAAAGALTTGLFFHP), 223–243 (ILSGAIVAAIAIAAGMVAVWC), 258–278 (VLMLGVGGFILGILGVIAGPV), 300–320 (DYFLLAVIKLAALVVAAASGF), 322–342 (GGRIFPAVFVGVALGLMLHEH), 343–363 (VPAVPAAITVSCAILGIVLVV), and 371–391 (LFMAAVVVPNTTLLPLLCIVM).

Belongs to the chloride channel (TC 2.A.49) family.

The protein localises to the cell membrane. This chain is Putative ion-transport protein YfeO, found in Escherichia coli (strain SMS-3-5 / SECEC).